Here is a 231-residue protein sequence, read N- to C-terminus: Large ribosomal subunit protein uL1 (231 aa).

The protein belongs to the universal ribosomal protein uL1 family. Part of the 50S ribosomal subunit.

Binds directly to 23S rRNA. The L1 stalk is quite mobile in the ribosome, and is involved in E site tRNA release. Its function is as follows. Protein L1 is also a translational repressor protein, it controls the translation of the L11 operon by binding to its mRNA. The protein is Large ribosomal subunit protein uL1 of Francisella philomiragia subsp. philomiragia (strain ATCC 25017 / CCUG 19701 / FSC 153 / O#319-036).